Consider the following 201-residue polypeptide: Ras-related protein Rab-1B (201 aa).

Met1 carries the post-translational modification N-acetylmethionine. Residues Ser17, Gly18, Val19, Gly20, Lys21, Ser22, Cys23, Tyr33, Thr34, Glu35, Ser36, Ser39, and Thr40 each contribute to the GTP site. Residue Ser22 participates in Mg(2+) binding. A Switch 1 motif is present at residues 30 to 45 (DDTYTESYISTIGVDF). Positions 40 and 63 each coordinate Mg(2+). Residues 64–83 (TAGQERFRTITSSYYRGAHG) form a switch 2 region; required for interaction with REP1/CHM region. Positions 65–80 (AGQERFRTITSSYYRG) match the Switch 2 motif. Gly66 is a binding site for GTP. At Ser76 the chain carries (Microbial infection) O-(2-cholinephosphoryl)serine. At Tyr77 the chain carries (Microbial infection) O-AMP-tyrosine. Asn121, Lys122, Asp124, Ser151, Ala152, and Lys153 together coordinate GTP. The tract at residues 174 to 201 (GPGAASGGERPNLKIDSTPVKPAGGGCC) is disordered. S-geranylgeranyl cysteine attachment occurs at residues Cys200 and Cys201. Cys201 is modified (cysteine methyl ester).

Belongs to the small GTPase superfamily. Rab family. As to quaternary structure, interacts with MICAL1 and MICAL2. Interacts (in GTP-bound form) with MICALCL, MICAL1 and MILCAL3. Interacts with GDI1; the interaction requires the GDP-bound state. Interacts with CHM/REP1; the interaction requires the GDP-bound form and is necessary for prenylation by GGTase II. Interacts with RabGAP TBC1D20. Interacts (in GDP-bound form) with lipid phosphatase MTMR6 (via GRAM domain); the interaction regulates MTMR6 recruitment to the endoplasmic reticulum-Golgi intermediate compartment. Interacts (in GDP-bound form) with lipid phosphatase MTMR7. (Microbial infection) Interacts with L.pneumophila AnkX. Interacts with L.pneumophila Lem3. Interacts with L.pneumophila SidD. Interacts with L.pneumophila DrrA. Mg(2+) serves as cofactor. Prenylated; by GGTase II, only after interaction of the substrate with Rab escort protein 1 (REP1). Post-translationally, (Microbial infection) AMPylation at Tyr-77 by L.pneumophila DrrA occurs in the switch 2 region and leads to moderate inactivation of the GTPase activity. It appears to prolong the lifetime of the GTP state of RAB1B by restricting access of GTPase effectors to switch 2 and blocking effector-stimulated GTP hydrolysis, thereby rendering RAB1B constitutively active. It is later de-AMPylated by L.pneumophila SidD, releasing RAB1B from bacterial phagosomes. In terms of processing, (Microbial infection) Phosphocholinated at Ser-76 by L.pneumophila AnkX, leading to displace GDP dissociation inhibitors (GDI). Both GDP-bound and GTP-bound forms can be phosphocholinated. Dephosphocholinated by L.pneumophila Lem3, restoring accessibility to L.pneumophila GTPase effector LepB. (Microbial infection) Glycosylated by S.typhimurium protein Ssek3: arginine GlcNAcylation prevents GTPase activity, thereby disrupting vesicular protein transport from the endoplasmic reticulum (ER) to the Golgi compartment.

The protein localises to the cytoplasm. Its subcellular location is the membrane. The protein resides in the preautophagosomal structure membrane. It localises to the perinuclear region. The enzyme catalyses GTP + H2O = GDP + phosphate + H(+). Its activity is regulated as follows. Regulated by guanine nucleotide exchange factors (GEFs) which promote the exchange of bound GDP for free GTP. Regulated by GTPase activating proteins (GAPs) including TBC1D20 which increases the GTP hydrolysis activity. Inhibited by GDP dissociation inhibitors (GDIs). In terms of biological role, the small GTPases Rab are key regulators of intracellular membrane trafficking, from the formation of transport vesicles to their fusion with membranes. Rabs cycle between an inactive GDP-bound form and an active GTP-bound form that is able to recruit to membranes different set of downstream effectors directly responsible for vesicle formation, movement, tethering and fusion. Plays a role in the initial events of the autophagic vacuole development which take place at specialized regions of the endoplasmic reticulum. Regulates vesicular transport between the endoplasmic reticulum and successive Golgi compartments. Required to modulate the compacted morphology of the Golgi. Promotes the recruitment of lipid phosphatase MTMR6 to the endoplasmic reticulum-Golgi intermediate compartment. This is Ras-related protein Rab-1B from Homo sapiens (Human).